Here is a 195-residue protein sequence, read N- to C-terminus: GTP cyclohydrolase-2 (195 aa).

48–52 (RIHSE) lines the GTP pocket. 3 residues coordinate Zn(2+): Cys-53, Cys-64, and Cys-66. GTP-binding positions include Gln-69, 90–92 (EGR), and Thr-112. Asp-124 (proton acceptor) is an active-site residue. Arg-126 (nucleophile) is an active-site residue. Thr-147 and Lys-152 together coordinate GTP.

The protein belongs to the GTP cyclohydrolase II family. It depends on Zn(2+) as a cofactor.

The catalysed reaction is GTP + 4 H2O = 2,5-diamino-6-hydroxy-4-(5-phosphoribosylamino)-pyrimidine + formate + 2 phosphate + 3 H(+). The protein operates within cofactor biosynthesis; riboflavin biosynthesis; 5-amino-6-(D-ribitylamino)uracil from GTP: step 1/4. Its function is as follows. Catalyzes the conversion of GTP to 2,5-diamino-6-ribosylamino-4(3H)-pyrimidinone 5'-phosphate (DARP), formate and pyrophosphate. The sequence is that of GTP cyclohydrolase-2 from Campylobacter fetus subsp. fetus (strain 82-40).